A 33-amino-acid chain; its full sequence is Alpha-amanitin proprotein (33 aa).

A propeptide spanning residues 1-10 (MSDINATRLP) is cleaved from the precursor. Ile11 carries the (3R,4R)-4,5-dihydroxyisoleucine; in form alpha-amanitin modification. Residue Ile11 is modified to (3R,4S)-4-hydroxyisoleucine; in form gamma-amanitin. Positions 11–18 (IWGIGCNP) form a cross-link, cyclopeptide (Ile-Pro). Residues 12 to 16 (WGIGC) constitute a cross-link (2'-cysteinyl-6'-hydroxytryptophan sulfoxide (Trp-Cys)). Position 18 is a 4-hydroxyproline (Pro18). The propeptide occupies 19-33 (SVGDEVTALLTSGEA).

This sequence belongs to the MSDIN fungal toxin family. Post-translationally, processed by the macrocyclase-peptidase enzyme POPB to yield a toxic cyclic decapeptide. POPB first removes 10 residues from the N-terminus. Conformational trapping of the remaining peptide forces the enzyme to release this intermediate rather than proceed to macrocyclization. The enzyme rebinds the remaining peptide in a different conformation and catalyzes macrocyclization of the N-terminal 8 residues.

Major toxin belonging to the bicyclic octapeptides amatoxins that acts by binding non-competitively to RNA polymerase II and greatly slowing the elongation of transcripts from target promoters. This is Alpha-amanitin proprotein from Amanita fuliginea (East Asian brown death cap).